A 281-amino-acid polypeptide reads, in one-letter code: Transmembrane protein 163 (281 aa).

At M1 to A80 the chain is on the cytoplasmic side. The tract at residues I16–M44 is disordered. The chain crosses the membrane as a helical span at residues L81–V101. Residues S102 to A108 are Extracellular-facing. A helical transmembrane segment spans residues S109 to W129. The Cytoplasmic portion of the chain corresponds to R130–M145. Residues A146–I166 traverse the membrane as a helical segment. Over H167–G179 the chain is Extracellular. The helical transmembrane segment at F180 to F200 threads the bilayer. Over M201 to R209 the chain is Cytoplasmic. A helical membrane pass occupies residues A210–L230. Residues S231 to K240 are Extracellular-facing. Residues V241–I261 form a helical membrane-spanning segment. At K262 to E281 the chain is on the cytoplasmic side.

It belongs to the TMEM163 family.

It is found in the cytoplasmic vesicle. It localises to the secretory vesicle. Its subcellular location is the synaptic vesicle membrane. The protein resides in the early endosome membrane. Functionally, may bind zinc and other divalent cations and recruit them to vesicular organelles. The sequence is that of Transmembrane protein 163 (tmem163) from Xenopus laevis (African clawed frog).